A 565-amino-acid polypeptide reads, in one-letter code: Probable serine/threonine-protein kinase abkA (565 aa).

The stretch at 44–77 (NNNNISLKDKFKDLKDLKDNLNEKKINNDNDDDD) forms a coiled coil. Residues 231–565 (LFQDDPIAAA…FKNIFYKNYK (335 aa)) enclose the Protein kinase domain. Residues 237–245 (IAAASIGQV) and K259 each bind ATP. D401 serves as the catalytic Proton acceptor.

It belongs to the protein kinase superfamily. ADCK protein kinase family.

This is Probable serine/threonine-protein kinase abkA (abkA) from Dictyostelium discoideum (Social amoeba).